The chain runs to 1332 residues: DEMETER-like protein 2 (1332 aa).

Over residues 1–23 (MEVEGEVREKEARVKGRQPETEV) the composition is skewed to basic and acidic residues. 3 disordered regions span residues 1-29 (MEVE…GLPQ), 137-242 (VSTS…TSEE), and 280-317 (VEGS…KKTD). Polar residues predominate over residues 137–153 (VSTSTQRTEPESPQITL). Residues 223-236 (SKAGIKKSSIAATA) are compositionally biased toward low complexity. A compositionally biased stretch (basic residues) spans 301–312 (PKGRRGQRRSNG). The interval 497–595 (KVQLDPETSR…AYMDLAAEFP (99 aa)) is DEMETER. The span at 739-753 (HQQDPESTIQTQDQQ) shows a compositional bias: polar residues. Residues 739-810 (HQQDPESTIQ…GGRKRERTER (72 aa)) are disordered. Basic residues predominate over residues 763 to 777 (KNRKKPTTSKPKKKS). Residues 787–810 (KSVDWDSLRKEAESGGRKRERTER) are compositionally biased toward basic and acidic residues. 4 residues coordinate [4Fe-4S] cluster: Cys970, Cys977, Cys980, and Cys986.

Belongs to the DNA glycosylase family. DEMETER subfamily. [4Fe-4S] cluster serves as cofactor.

It is found in the nucleus. Functionally, potential transcriptional activator that may act by nicking the target promoter. Catalyzes the release of 5-methylcytosine (5-meC) from DNA by a glycosylase/lyase mechanism. This chain is DEMETER-like protein 2 (DML2), found in Arabidopsis thaliana (Mouse-ear cress).